Reading from the N-terminus, the 209-residue chain is Uracil phosphoribosyltransferase (209 aa).

5-phospho-alpha-D-ribose 1-diphosphate is bound by residues arginine 79, arginine 104, and 131–139; that span reads DPMLATGGS. Uracil contacts are provided by residues isoleucine 194 and 199-201; that span reads GDA. Aspartate 200 provides a ligand contact to 5-phospho-alpha-D-ribose 1-diphosphate.

This sequence belongs to the UPRTase family. Requires Mg(2+) as cofactor.

The catalysed reaction is UMP + diphosphate = 5-phospho-alpha-D-ribose 1-diphosphate + uracil. It participates in pyrimidine metabolism; UMP biosynthesis via salvage pathway; UMP from uracil: step 1/1. With respect to regulation, allosterically activated by GTP. Its function is as follows. Catalyzes the conversion of uracil and 5-phospho-alpha-D-ribose 1-diphosphate (PRPP) to UMP and diphosphate. In Streptococcus pyogenes serotype M49 (strain NZ131), this protein is Uracil phosphoribosyltransferase.